A 152-amino-acid polypeptide reads, in one-letter code: Large ribosomal subunit protein bL9 (152 aa).

Belongs to the bacterial ribosomal protein bL9 family.

Its function is as follows. Binds to the 23S rRNA. The chain is Large ribosomal subunit protein bL9 from Prochlorococcus marinus (strain NATL1A).